Here is a 670-residue protein sequence, read N- to C-terminus: Probable potassium transport system protein Kup 1 (670 aa).

13 helical membrane passes run 14-34 (GAGFIIAMGIVYGDIGTSPLY), 58-78 (LSLIIWTLTLITTVKYVWIAL), 101-121 (WLIIPAMIGGAALLSDGALTP), 147-167 (LPIVIITLAILAVLFLIQRFG), 175-195 (FGPVMFIWFSFLGITGLINLF), 196-216 (GDFSVLQAINPYWAIHLLLSP), 220-240 (AGIFVLGSVFLATTGAEALYS), 252-272 (VSWPFVKVCIILSYCGQGAWL), 294-314 (LIIFSVILATLAAIIASQALI), 345-365 (LYIPAVNLGLWLAASFIVVYF), 374-394 (AYGLAITVTMLMTTTLLTVYL), 403-423 (VLVGLFFTVFIFIEGLFFAAS), and 427-447 (FMHGGYVVVIIAAMILFVMAI).

It belongs to the HAK/KUP transporter (TC 2.A.72) family.

The protein resides in the cell membrane. It catalyses the reaction K(+)(in) + H(+)(in) = K(+)(out) + H(+)(out). Its function is as follows. Transport of potassium into the cell. Likely operates as a K(+):H(+) symporter. This Lactococcus lactis subsp. lactis (strain IL1403) (Streptococcus lactis) protein is Probable potassium transport system protein Kup 1.